The primary structure comprises 413 residues: CinA-like protein (413 aa).

The protein belongs to the CinA family.

The chain is CinA-like protein from Geotalea daltonii (strain DSM 22248 / JCM 15807 / FRC-32) (Geobacter daltonii).